The following is a 315-amino-acid chain: 4-hydroxy-3-methylbut-2-enyl diphosphate reductase (315 aa).

Cys12 is a binding site for [4Fe-4S] cluster. (2E)-4-hydroxy-3-methylbut-2-enyl diphosphate-binding residues include His41 and His74. Dimethylallyl diphosphate-binding residues include His41 and His74. Isopentenyl diphosphate is bound by residues His41 and His74. Cys96 contributes to the [4Fe-4S] cluster binding site. Residue His124 participates in (2E)-4-hydroxy-3-methylbut-2-enyl diphosphate binding. His124 lines the dimethylallyl diphosphate pocket. Position 124 (His124) interacts with isopentenyl diphosphate. Glu126 acts as the Proton donor in catalysis. Thr168 contributes to the (2E)-4-hydroxy-3-methylbut-2-enyl diphosphate binding site. Cys198 is a binding site for [4Fe-4S] cluster. The (2E)-4-hydroxy-3-methylbut-2-enyl diphosphate site is built by Ser226, Ser227, Asn228, and Ser270. Residues Ser226, Ser227, Asn228, and Ser270 each contribute to the dimethylallyl diphosphate site. Residues Ser226, Ser227, Asn228, and Ser270 each contribute to the isopentenyl diphosphate site.

It belongs to the IspH family. [4Fe-4S] cluster is required as a cofactor.

The catalysed reaction is isopentenyl diphosphate + 2 oxidized [2Fe-2S]-[ferredoxin] + H2O = (2E)-4-hydroxy-3-methylbut-2-enyl diphosphate + 2 reduced [2Fe-2S]-[ferredoxin] + 2 H(+). The enzyme catalyses dimethylallyl diphosphate + 2 oxidized [2Fe-2S]-[ferredoxin] + H2O = (2E)-4-hydroxy-3-methylbut-2-enyl diphosphate + 2 reduced [2Fe-2S]-[ferredoxin] + 2 H(+). Its pathway is isoprenoid biosynthesis; dimethylallyl diphosphate biosynthesis; dimethylallyl diphosphate from (2E)-4-hydroxy-3-methylbutenyl diphosphate: step 1/1. It functions in the pathway isoprenoid biosynthesis; isopentenyl diphosphate biosynthesis via DXP pathway; isopentenyl diphosphate from 1-deoxy-D-xylulose 5-phosphate: step 6/6. Catalyzes the conversion of 1-hydroxy-2-methyl-2-(E)-butenyl 4-diphosphate (HMBPP) into a mixture of isopentenyl diphosphate (IPP) and dimethylallyl diphosphate (DMAPP). Acts in the terminal step of the DOXP/MEP pathway for isoprenoid precursor biosynthesis. This is 4-hydroxy-3-methylbut-2-enyl diphosphate reductase from Azotobacter vinelandii (strain DJ / ATCC BAA-1303).